The sequence spans 79 residues: Small ribosomal subunit protein bS18 (79 aa).

It belongs to the bacterial ribosomal protein bS18 family. As to quaternary structure, part of the 30S ribosomal subunit. Forms a tight heterodimer with protein bS6.

Functionally, binds as a heterodimer with protein bS6 to the central domain of the 16S rRNA, where it helps stabilize the platform of the 30S subunit. This is Small ribosomal subunit protein bS18 from Ureaplasma parvum serovar 3 (strain ATCC 27815 / 27 / NCTC 11736).